The sequence spans 182 residues: Crossover junction endodeoxyribonuclease RuvC (182 aa).

Residues Asp7, Glu67, and Asp139 contribute to the active site. Asp7, Glu67, and Asp139 together coordinate Mg(2+).

The protein belongs to the RuvC family. Homodimer which binds Holliday junction (HJ) DNA. The HJ becomes 2-fold symmetrical on binding to RuvC with unstacked arms; it has a different conformation from HJ DNA in complex with RuvA. In the full resolvosome a probable DNA-RuvA(4)-RuvB(12)-RuvC(2) complex forms which resolves the HJ. The cofactor is Mg(2+).

It localises to the cytoplasm. The catalysed reaction is Endonucleolytic cleavage at a junction such as a reciprocal single-stranded crossover between two homologous DNA duplexes (Holliday junction).. The RuvA-RuvB-RuvC complex processes Holliday junction (HJ) DNA during genetic recombination and DNA repair. Endonuclease that resolves HJ intermediates. Cleaves cruciform DNA by making single-stranded nicks across the HJ at symmetrical positions within the homologous arms, yielding a 5'-phosphate and a 3'-hydroxyl group; requires a central core of homology in the junction. The consensus cleavage sequence is 5'-(A/T)TT(C/G)-3'. Cleavage occurs on the 3'-side of the TT dinucleotide at the point of strand exchange. HJ branch migration catalyzed by RuvA-RuvB allows RuvC to scan DNA until it finds its consensus sequence, where it cleaves and resolves the cruciform DNA. The polypeptide is Crossover junction endodeoxyribonuclease RuvC (Bordetella petrii (strain ATCC BAA-461 / DSM 12804 / CCUG 43448)).